A 173-amino-acid polypeptide reads, in one-letter code: NADH-ubiquinone oxidoreductase chain 6 (173 aa).

5 helical membrane passes run 1-21, 27-47, 48-68, 87-107, and 139-159; these read MTYFVLFLGLCFVLGGLAVAS, YGVVGLVLASVAGCGWLLSLG, VSFVSLVLFMVYLGGMLVVFV, VVGYGVGFVMVLMVGMVVGGF, and CGVGMFLVAGWGLLLTLFVVL.

Belongs to the complex I subunit 6 family.

The protein localises to the mitochondrion membrane. It carries out the reaction a ubiquinone + NADH + 5 H(+)(in) = a ubiquinol + NAD(+) + 4 H(+)(out). Functionally, core subunit of the mitochondrial membrane respiratory chain NADH dehydrogenase (Complex I) that is believed to belong to the minimal assembly required for catalysis. Complex I functions in the transfer of electrons from NADH to the respiratory chain. The immediate electron acceptor for the enzyme is believed to be ubiquinone. In Aethia pusilla (Least auklet), this protein is NADH-ubiquinone oxidoreductase chain 6 (MT-ND6).